Here is a 681-residue protein sequence, read N- to C-terminus: DNA ligase (681 aa).

Residues 45–49 (DFDFD), 94–95 (SL), and Glu120 contribute to the NAD(+) site. The active-site N6-AMP-lysine intermediate is the Lys122. 4 residues coordinate NAD(+): Arg143, Glu177, Lys289, and Lys313. Residues Cys403, Cys406, Cys421, and Cys426 each coordinate Zn(2+). The BRCT domain occupies 593–681 (SDQQPFAGQS…SLKINFKNTI (89 aa)).

Belongs to the NAD-dependent DNA ligase family. LigA subfamily. Mg(2+) serves as cofactor. The cofactor is Mn(2+).

The catalysed reaction is NAD(+) + (deoxyribonucleotide)n-3'-hydroxyl + 5'-phospho-(deoxyribonucleotide)m = (deoxyribonucleotide)n+m + AMP + beta-nicotinamide D-nucleotide.. In terms of biological role, DNA ligase that catalyzes the formation of phosphodiester linkages between 5'-phosphoryl and 3'-hydroxyl groups in double-stranded DNA using NAD as a coenzyme and as the energy source for the reaction. It is essential for DNA replication and repair of damaged DNA. This Leptospira borgpetersenii serovar Hardjo-bovis (strain JB197) protein is DNA ligase.